Consider the following 424-residue polypeptide: Inhibin beta A chain (424 aa).

The first 20 residues, 1 to 20, serve as a signal peptide directing secretion; sequence MPLLWKRGFLLVICWIIVRS. Positions 21-308 are excised as a propeptide; it reads SPTPGSEGHS…EDRQHRRRER (288 aa). Asn-165 is a glycosylation site (N-linked (GlcNAc...) asparagine). 2 disordered regions span residues 178–200 and 260–288; these read QQRQPKGNSEAAEDMEDMGLKGE and KKKKEDDGEGKEKDGGELTGEEEKEQSHR. The span at 263 to 275 shows a compositional bias: basic and acidic residues; that stretch reads KEDDGEGKEKDGG. Cystine bridges form between Cys-312/Cys-320, Cys-319/Cys-389, Cys-348/Cys-421, and Cys-352/Cys-423.

Belongs to the TGF-beta family. Dimeric, linked by one or more disulfide bonds. Inhibin A is a dimer of alpha and beta-A. Inhibin B is a dimer of alpha and beta-B. Activin A is a homodimer of beta-A. Activin B is a homodimer of beta-B. Activin AB is a dimer of beta-A and beta-B. In terms of tissue distribution, ciliary ganglion neurons. Levels are higher in the choroid than the iris.

The protein localises to the secreted. Its function is as follows. Inhibins and activins inhibit and activate, respectively, the secretion of follitropin by the pituitary gland. Inhibins/activins are involved in regulating a number of diverse functions such as hypothalamic and pituitary hormone secretion, gonadal hormone secretion, germ cell development and maturation, erythroid differentiation, insulin secretion, nerve cell survival, embryonic axial development or bone growth, depending on their subunit composition. Inhibins appear to oppose the functions of activins. Induces somatostatin in the ciliary ganglion neurons and may play a role in regulating neurotransmitter phenotype. The chain is Inhibin beta A chain (INHBA) from Gallus gallus (Chicken).